The sequence spans 1793 residues: MLSFHFWKSRGQPTDAASSVADGIQTPRCCRRCQANNWTGQLSYRTLATVSAGAAAPQPQTTSTASSRSLPTSLRLAAAPPQGLKNWEVVAAVAAVPTALGPVQIRGTLLRATLQPLRGQRRTQDFPSDHHCLFLSLKPGQGLIMEAAPPELNSKARQAEVGDGVSSAQDSQELKQQLWPLPKPSASSQREAKYVDMCASAEVQRESPQTMKLTLGHCPGGQRASRSPKEKAQDEPSSKTPSPQNNPASSQLSRSQHSASEEGGNFSSSSSSSPMNKAEEDGLSKMEDSTTSTGALATSSSSLGFESESGESEGCQAVGGEGEKISGGGGGGKGGGGGGAGDGTECRDIIAKSQGSRDPPKVEEAHYITTHEIQLSEVEQDMDFDVGLASRWDFEDNNVIYSFVDYASFGGSDETPGDITSLTEEDDDNSCYLSTTPSTNTTRTPSPTSSDLARPNAGRSGRDTSSTEVGSGPSDSGPTPPPTGPGTAPLTEPLPETPEAASGAAAAAASSCGSAASQILLSIKPASRAINEPSNVRAKQNIIYAAKHEGDMSLRVSTAAEHNSSSLKQNPAAAVAQDHAKKFIAVPARLQTRCGAIRAKELVDYSSGASSAVSELDDADKEVRNLTSRAFRSLAYPYFEALNISSRESSTTLSEVGFGRWSTFLDLKCGGVGARVEQSLLRSSAASVAAGLRKGSGARATADQLYIQSKKSQTKALEFVVSKVEGEIKHVETPLCFQKQVQTGSRVVTLLEPLNVRSESKASSAPGPGRATKGPGKGPGSAYTDDGSETSEGSKPTSRADGPQKSKFASSLLKNVISKKMQREHEFKMERGEVMDTSHHLSGTSKETEGARGSERQRERGLQRQSSRHSEAGSEYTVVSMSDAGGEGSVAGSKSPVFKASTPRERNAGPGRNFTDGHTEVCEIKKSASETVKGIFLRSQNSAFRSWKEKEAEKREEQAPIGKLKLPKGGDWRADLGEISASKNTIMSRLFVPNIQQTPKDKQPRKQATKYPAAQATSTAVIRPKAPEIKIRLGSVQQPSSDFNIAKLLTPKLAGGSASNLFKTIEDNSRAQQKLFRGDNLEKVPHFQVRDIRDKSKAQGPLHQVRDVRKLIKGSGDSSDKGSVTPEQGLTGPKPRQLSAAAGGSGSLSPMVITCQAVVNQREDSMDREPRESMGKGGGSRVLNSSSPEGTVLVHRASGRLPVATIAPNKPEQGSYLPVLKIVSKASTQKTPEKLKEEEVKEEGKATKPARNALEKLTAAVRSMEELYSFNRNEWKRKSDPLPMMMDSHVLSLIASEEREGVVVADGDHDKLSKRLGEVEERGTGNKAGVVLRGAPIERLQRRNSNPSAESVSARAAAFENLARERPRSLYIPPVHKDVERTQPLQPLPPLPSNRNVFTVSASSIQKTGGVAGKFPQGPSPESPSAAKGIKSQGLRSLKISPATRAPPDEVTNRKSGSNLEKSNSDCENYLTIPLKGSSAAGELLSRPGASREGPPNSSAATLCSLPPLSARSQVPSSSKGSQVSGTSRPAWRTKPDNPRETVAAPPGPQSPEHPPTTIYHQPPLPFTLQGAQPQVLCFSPPSMPAPAPAASAPVPTDPFQQAQPQQTQRKMLLDVTTGQYYLVDTPVQPMTRRLFDPETGQYVDVPMTSQQQAVAPMSISVPPLALSPGAYGPTYMIYPGFLPTVLPTNALQPTPIARAPRGSELSPMVAEPSSKEAAATFTEAPYFMASGQSPASSTSSAPAATSQLLGAKAFAQLHGKPVISITSQPLGPRIIAPPSFDGTTMSFVVEHR.

3 disordered regions span residues Ala-156 to Gln-189, Gln-204 to Val-362, and Ala-407 to Ala-505. Over residues Ser-166–Lys-175 the composition is skewed to polar residues. The span at Ser-227 to Ser-237 shows a compositional bias: basic and acidic residues. Residues Ser-238–Pro-247 are compositionally biased toward polar residues. Over residues Ala-248–Ser-258 the composition is skewed to low complexity. Over residues Lys-277–Asp-288 the composition is skewed to basic and acidic residues. Low complexity predominate over residues Ser-289–Ser-307. The span at Ala-317–Asp-342 shows a compositional bias: gly residues. A compositionally biased stretch (low complexity) spans Ser-434–Ser-450. Polar residues predominate over residues Asp-463 to Ser-476. Low complexity predominate over residues Pro-485–Ala-505. Residue Thr-733 is modified to Phosphothreonine. Disordered regions lie at residues Arg-757–Ala-809, Met-829–Gly-917, Arg-1090–Ser-1147, Gln-1161–Ser-1187, Gln-1229–Pro-1249, Thr-1408–Ser-1465, and Gly-1482–Phe-1567. 2 stretches are compositionally biased toward basic and acidic residues: residues Met-829 to His-839 and Lys-846 to Ala-872. The span at Lys-1113–Ser-1123 shows a compositional bias: low complexity. Positions Gln-1161–Met-1174 are enriched in basic and acidic residues. Ser-1187 carries the post-translational modification Phosphoserine. Over residues Thr-1231–Ala-1246 the composition is skewed to basic and acidic residues. The span at Ser-1513–Ser-1528 shows a compositional bias: low complexity. A compositionally biased stretch (pro residues) spans Pro-1546–Pro-1555. Arg-1774 is subject to Omega-N-methylarginine.

In terms of tissue distribution, expressed in muscle, heart, kidney and liver but barely detectable in lung, pancreas and brain. In liver veins, expressed in hepatic vein, extrahepatic portal vein and intrahepatic portal vein.

This is an uncharacterized protein from Homo sapiens (Human).